A 475-amino-acid polypeptide reads, in one-letter code: UDP-N-acetylmuramate--L-alanine ligase (475 aa).

Glycine 114–threonine 120 is a binding site for ATP.

Belongs to the MurCDEF family.

The protein localises to the cytoplasm. It carries out the reaction UDP-N-acetyl-alpha-D-muramate + L-alanine + ATP = UDP-N-acetyl-alpha-D-muramoyl-L-alanine + ADP + phosphate + H(+). Its pathway is cell wall biogenesis; peptidoglycan biosynthesis. In terms of biological role, cell wall formation. The protein is UDP-N-acetylmuramate--L-alanine ligase of Bartonella henselae (strain ATCC 49882 / DSM 28221 / CCUG 30454 / Houston 1) (Rochalimaea henselae).